The primary structure comprises 505 residues: Cobyric acid synthase (505 aa).

One can recognise a GATase cobBQ-type domain in the interval 260–453 (RIAVAAIYFP…FHGIIDEPEV (194 aa)). Residue C341 is the Nucleophile of the active site. The active site involves H445.

Belongs to the CobB/CobQ family. CobQ subfamily.

Its pathway is cofactor biosynthesis; adenosylcobalamin biosynthesis. Catalyzes amidations at positions B, D, E, and G on adenosylcobyrinic A,C-diamide. NH(2) groups are provided by glutamine, and one molecule of ATP is hydrogenolyzed for each amidation. This Chlorobium phaeobacteroides (strain DSM 266 / SMG 266 / 2430) protein is Cobyric acid synthase.